The chain runs to 293 residues: Nucleotide-binding protein BA_5384/GBAA_5384/BAS5004 (293 aa).

14–21 (GMSGAGKT) lines the ATP pocket. GTP is bound at residue 65-68 (DLRG).

This sequence belongs to the RapZ-like family.

In terms of biological role, displays ATPase and GTPase activities. This is Nucleotide-binding protein BA_5384/GBAA_5384/BAS5004 from Bacillus anthracis.